We begin with the raw amino-acid sequence, 383 residues long: tRNA-specific 2-thiouridylase MnmA (383 aa).

Residues 9–16 and Met-35 contribute to the ATP site; that span reads GMSGGVDS. The interaction with target base in tRNA stretch occupies residues 95–97; the sequence is NPD. Cys-100 functions as the Nucleophile in the catalytic mechanism. A disulfide bridge links Cys-100 with Cys-196. Gly-124 is a binding site for ATP. The interval 146-148 is interaction with tRNA; the sequence is KDQ. Residue Cys-196 is the Cysteine persulfide intermediate of the active site. The interaction with tRNA stretch occupies residues 308–309; sequence RY.

The protein belongs to the MnmA/TRMU family.

Its subcellular location is the cytoplasm. The catalysed reaction is S-sulfanyl-L-cysteinyl-[protein] + uridine(34) in tRNA + AH2 + ATP = 2-thiouridine(34) in tRNA + L-cysteinyl-[protein] + A + AMP + diphosphate + H(+). Its function is as follows. Catalyzes the 2-thiolation of uridine at the wobble position (U34) of tRNA, leading to the formation of s(2)U34. The sequence is that of tRNA-specific 2-thiouridylase MnmA from Burkholderia lata (strain ATCC 17760 / DSM 23089 / LMG 22485 / NCIMB 9086 / R18194 / 383).